A 1358-amino-acid chain; its full sequence is DNA-directed RNA polymerase subunit beta (1358 aa).

It belongs to the RNA polymerase beta chain family. As to quaternary structure, the RNAP catalytic core consists of 2 alpha, 1 beta, 1 beta' and 1 omega subunit. When a sigma factor is associated with the core the holoenzyme is formed, which can initiate transcription.

The catalysed reaction is RNA(n) + a ribonucleoside 5'-triphosphate = RNA(n+1) + diphosphate. In terms of biological role, DNA-dependent RNA polymerase catalyzes the transcription of DNA into RNA using the four ribonucleoside triphosphates as substrates. This is DNA-directed RNA polymerase subunit beta from Francisella tularensis subsp. holarctica (strain FTNF002-00 / FTA).